Consider the following 262-residue polypeptide: uncharacterized protein (262 aa).

An N-terminal signal peptide occupies residues 1-22 (MMNNSITLLLALLVGLVGFAFT).

Belongs to the IIV-6 117L family.

This is an uncharacterized protein from Aedes vexans (Inland floodwater mosquito).